The chain runs to 300 residues: Formate dehydrogenase-O iron-sulfur subunit (300 aa).

At 1-260 the chain is on the cytoplasmic side; sequence MAYQSQDIIR…KFWKGIWKPL (260 aa). 4 consecutive 4Fe-4S ferredoxin-type domains span residues 30–60, 91–123, 124–153, and 158–189; these read VAKLIDVTTCIGCKACQVACSEWNDIRDTVG, LEWLIRKDGCMHCSDPGCLKACPAEGAIIQYAN, GIVDFQSEQCIGCGYCIAGCPFDIPRLNPE, and YKCTLCVDRVVVGQEPACVKTCPTGAIHFGTK. Residues C39, C42, C45, C49, C100, C103, C108, C112, C133, C136, C139, C143, C160, C163, C175, and C179 each coordinate [4Fe-4S] cluster. Residues 261–279 form a helical membrane-spanning segment; that stretch reads AAVGFAATFAASIFHYVGV. At 280–300 the chain is on the periplasmic side; it reads GPNRADEEENNLHEEKDEERK.

Formate dehydrogenase is a membrane-bound complex, formed by subunits alpha, beta and gamma. [4Fe-4S] cluster is required as a cofactor.

The protein localises to the cell membrane. In terms of biological role, allows to use formate as major electron donor during aerobic respiration. The beta chain is an electron transfer unit containing 4 cysteine clusters involved in the formation of iron-sulfur centers. Electrons are transferred from the gamma chain to the molybdenum cofactor of the alpha subunit. This chain is Formate dehydrogenase-O iron-sulfur subunit (fdoH), found in Escherichia coli (strain K12).